Reading from the N-terminus, the 118-residue chain is Large ribosomal subunit protein uL18 (118 aa).

Belongs to the universal ribosomal protein uL18 family. As to quaternary structure, part of the 50S ribosomal subunit; part of the 5S rRNA/L5/L18/L25 subcomplex. Contacts the 5S and 23S rRNAs.

Functionally, this is one of the proteins that bind and probably mediate the attachment of the 5S RNA into the large ribosomal subunit, where it forms part of the central protuberance. The polypeptide is Large ribosomal subunit protein uL18 (Rickettsia typhi (strain ATCC VR-144 / Wilmington)).